Reading from the N-terminus, the 513-residue chain is ATP synthase subunit alpha (513 aa).

An ATP-binding site is contributed by 169 to 176 (GDRQTGKT).

This sequence belongs to the ATPase alpha/beta chains family. In terms of assembly, F-type ATPases have 2 components, CF(1) - the catalytic core - and CF(0) - the membrane proton channel. CF(1) has five subunits: alpha(3), beta(3), gamma(1), delta(1), epsilon(1). CF(0) has three main subunits: a(1), b(2) and c(9-12). The alpha and beta chains form an alternating ring which encloses part of the gamma chain. CF(1) is attached to CF(0) by a central stalk formed by the gamma and epsilon chains, while a peripheral stalk is formed by the delta and b chains.

The protein localises to the cell inner membrane. It carries out the reaction ATP + H2O + 4 H(+)(in) = ADP + phosphate + 5 H(+)(out). Its function is as follows. Produces ATP from ADP in the presence of a proton gradient across the membrane. The alpha chain is a regulatory subunit. The chain is ATP synthase subunit alpha from Tolumonas auensis (strain DSM 9187 / NBRC 110442 / TA 4).